Here is a 267-residue protein sequence, read N- to C-terminus: 5'-nucleotidase SurE (267 aa).

Positions 14, 15, 45, and 100 each coordinate a divalent metal cation.

The protein belongs to the SurE nucleotidase family. It depends on a divalent metal cation as a cofactor.

Its subcellular location is the cytoplasm. It carries out the reaction a ribonucleoside 5'-phosphate + H2O = a ribonucleoside + phosphate. In terms of biological role, nucleotidase that shows phosphatase activity on nucleoside 5'-monophosphates. The chain is 5'-nucleotidase SurE from Methanosarcina mazei (strain ATCC BAA-159 / DSM 3647 / Goe1 / Go1 / JCM 11833 / OCM 88) (Methanosarcina frisia).